Reading from the N-terminus, the 416-residue chain is Tyrosine-protein phosphatase non-receptor type 2 (416 aa).

Positions 5 to 275 (IEREFEELDA…RFSYMAIIEG (271 aa)) constitute a Tyrosine-protein phosphatase domain. Tyrosine 22 is modified (phosphotyrosine). Phosphoserine is present on serine 52. Phosphotyrosine is present on tyrosine 68. Substrate is bound by residues aspartate 182, 216 to 222 (CSAGIGR), and glutamine 260. Catalysis depends on cysteine 216, which acts as the Phosphocysteine intermediate. Cysteine 216 bears the S-nitrosocysteine mark. Serine 293, serine 298, serine 304, serine 320, and serine 339 each carry phosphoserine. The interval 341–410 (ESILRKRIRE…WTLLFQLNVL (70 aa)) is endoplasmic reticulum location. Positions 371–410 (ERKRKRWLYWQPILTKMGFVSVILVGALVGWTLLFQLNVL) are may mediate interaction with STX17.

The protein belongs to the protein-tyrosine phosphatase family. Non-receptor class 1 subfamily. In terms of assembly, interacts with RMDN3. Interacts with TMED9. Interacts with STX17; dephosphorylates STX17. Interacts with ITGA1 (via cytoplasmic domain); activates the phosphatase activity towards EGFR. Interacts with TRAF2; probably involved in tumor necrosis factor-mediated signaling. Interacts with MET. Interacts with FAM220A and STAT3; interaction with FAM220A promotes interaction of PTPN2 with transcriptional activator STAT3, leading to dephosphorylation of STAT3 by PTPN2 and negative regulation of STAT3 transcriptional activator activity. Post-translationally, specifically phosphorylated in a cell cycle-dependent manner by cyclin-dependent kinases CDK1 and CDK2. Probably activated through phosphorylation by PKR. As to expression, does not show tissue- or cell-type specificity although levels of transcription show variability. Macrophages showed higher levels of expression than lymphocytes.

The protein resides in the cytoplasm. Its subcellular location is the endoplasmic reticulum-Golgi intermediate compartment. It is found in the endoplasmic reticulum. It localises to the nucleus membrane. The protein localises to the nucleus. The protein resides in the cell membrane. It carries out the reaction O-phospho-L-tyrosyl-[protein] + H2O = L-tyrosyl-[protein] + phosphate. In terms of biological role, non-receptor type tyrosine-specific phosphatase that dephosphorylates receptor protein tyrosine kinases including INSR, EGFR, CSF1R, PDGFR. Also dephosphorylates non-receptor protein tyrosine kinases like JAK1, JAK2, JAK3, Src family kinases, STAT1, STAT3 and STAT6 either in the nucleus or the cytoplasm. Negatively regulates numerous signaling pathways and biological processes like hematopoiesis, inflammatory response, cell proliferation and differentiation, and glucose homeostasis. Plays a multifaceted and important role in the development of the immune system. Functions in T-cell receptor signaling through dephosphorylation of FYN and LCK to control T-cells differentiation and activation. Dephosphorylates CSF1R, negatively regulating its downstream signaling and macrophage differentiation. Negatively regulates cytokine (IL2/interleukin-2 and interferon)-mediated signaling through dephosphorylation of the cytoplasmic kinases JAK1, JAK3 and their substrate STAT1, that propagate signaling downstream of the cytokine receptors. Also regulates the IL6/interleukin-6 and IL4/interleukin-4 cytokine signaling through dephosphorylation of STAT3 and STAT6 respectively. In addition to the immune system, it is involved in anchorage-dependent, negative regulation of EGF-stimulated cell growth. Activated by the integrin ITGA1/ITGB1, it dephosphorylates EGFR and negatively regulates EGF signaling. Dephosphorylates PDGFRB and negatively regulates platelet-derived growth factor receptor-beta signaling pathway and therefore cell proliferation. Negatively regulates tumor necrosis factor-mediated signaling downstream via MAPK through SRC dephosphorylation. May also regulate the hepatocyte growth factor receptor signaling pathway through dephosphorylation of the hepatocyte growth factor receptor MET. Also plays an important role in glucose homeostasis. For instance, negatively regulates the insulin receptor signaling pathway through the dephosphorylation of INSR and control gluconeogenesis and liver glucose production through negative regulation of the IL6 signaling pathways. May also bind DNA. This is Tyrosine-protein phosphatase non-receptor type 2 (Ptpn2) from Rattus norvegicus (Rat).